We begin with the raw amino-acid sequence, 399 residues long: Phospholipase C (399 aa).

Positions Met-1–Trp-28 are cleaved as a signal peptide. Positions 28, 38, 83, 95, 153, 157, 163, 175, and 179 each coordinate Zn(2+). A Zn-dependent PLC domain is found at Asp-29–Thr-277. The interval Asn-275 to Ile-282 is linker. The PLAT domain occupies Asn-283–Lys-399. Ca(2+) contacts are provided by Gly-298, Thr-299, Asp-300, Asp-320, Asn-321, Gly-323, Asn-324, Asp-325, and Asp-363.

The protein belongs to the bacterial zinc-metallophospholipase C family. It depends on Ca(2+) as a cofactor. Zn(2+) serves as cofactor.

It is found in the secreted. The enzyme catalyses a 1,2-diacyl-sn-glycero-3-phosphocholine + H2O = phosphocholine + a 1,2-diacyl-sn-glycerol + H(+). Bacterial hemolysins are exotoxins that attack blood cell membranes and cause cell rupture. Binds to eukaryotic membranes where it hydrolyzes phosphatidylcholine, sphingomyelin and phosphatidylethanolamine. The diacylglycerol produced can activate both the arachidonic acid pathway, leading to modulation of the inflammatory response cascade and thrombosis, and protein kinase C, leading to activation of eukaryotic phospholipases and further membrane damage. The protein is Phospholipase C (plc) of Clostridium haemolyticum.